The primary structure comprises 406 residues: Oligouridylate-binding protein 1 (406 aa).

2 RRM domains span residues 49–123 (RSVY…WAYA) and 134–212 (YNIF…WAAK). The tract at residues 231–250 (TSGTSDDGQEKVVNEDAPEN) is disordered. Positions 255–329 (TTVYVGNLAP…KPVKCSWGSK (75 aa)) constitute an RRM 3 domain.

The protein resides in the nucleus. In terms of biological role, heterogeneous nuclear ribonucleoprotein (hnRNP)-like protein that acts as a component of the pre-mRNA processing machinery. Functions to facilitate the nuclear maturation of plant pre-mRNAs. Binds with high affinity to RNA molecules that contain AU-rich regions. May bind to the 3'-UTR and protects the mRNA against exonucleolytic degradation. Associates with nuclear poly(A)+ RNA in nucleus in vivo. Does not stimulate transcription or the 3' end cleavage/polyadenylation reaction. This Nicotiana plumbaginifolia (Leadwort-leaved tobacco) protein is Oligouridylate-binding protein 1 (UBP1).